Consider the following 469-residue polypeptide: Glutamate--tRNA ligase (469 aa).

The 'HIGH' region motif lies at 9-19 (PSPTGFLHVGG). Zn(2+) is bound by residues cysteine 98, cysteine 100, cysteine 125, and aspartate 127. A 'KMSKS' region motif is present at residues 236–240 (KLSKR). Lysine 239 contributes to the ATP binding site.

The protein belongs to the class-I aminoacyl-tRNA synthetase family. Glutamate--tRNA ligase type 1 subfamily. Monomer. It depends on Zn(2+) as a cofactor.

The protein localises to the cytoplasm. It catalyses the reaction tRNA(Glu) + L-glutamate + ATP = L-glutamyl-tRNA(Glu) + AMP + diphosphate. In terms of biological role, catalyzes the attachment of glutamate to tRNA(Glu) in a two-step reaction: glutamate is first activated by ATP to form Glu-AMP and then transferred to the acceptor end of tRNA(Glu). This chain is Glutamate--tRNA ligase, found in Shewanella woodyi (strain ATCC 51908 / MS32).